The following is a 310-amino-acid chain: Ribosomal RNA small subunit methyltransferase H (310 aa).

S-adenosyl-L-methionine contacts are provided by residues 35-37 (GGH), aspartate 52, phenylalanine 79, aspartate 100, and glutamine 107.

This sequence belongs to the methyltransferase superfamily. RsmH family.

It is found in the cytoplasm. The enzyme catalyses cytidine(1402) in 16S rRNA + S-adenosyl-L-methionine = N(4)-methylcytidine(1402) in 16S rRNA + S-adenosyl-L-homocysteine + H(+). Functionally, specifically methylates the N4 position of cytidine in position 1402 (C1402) of 16S rRNA. This is Ribosomal RNA small subunit methyltransferase H from Anaeromyxobacter sp. (strain Fw109-5).